We begin with the raw amino-acid sequence, 78 residues long: RNA-binding protein Hfq (78 aa).

One can recognise a Sm domain in the interval 9–69 (DHFLNQLRKE…ISTFAPQRNV (61 aa)).

The protein belongs to the Hfq family. In terms of assembly, homohexamer.

In terms of biological role, RNA chaperone that binds small regulatory RNA (sRNAs) and mRNAs to facilitate mRNA translational regulation in response to envelope stress, environmental stress and changes in metabolite concentrations. Also binds with high specificity to tRNAs. The chain is RNA-binding protein Hfq from Halalkalibacterium halodurans (strain ATCC BAA-125 / DSM 18197 / FERM 7344 / JCM 9153 / C-125) (Bacillus halodurans).